The chain runs to 174 residues: Myosin regulatory light chain sqh (174 aa).

Thr21 bears the Phosphothreonine mark. Phosphoserine is present on Ser22. EF-hand domains lie at 31-66 (AQIA…LGKN) and 100-135 (DPED…MGDR). Ca(2+) contacts are provided by Asp44, Asn46, Asp48, and Asp55.

As to quaternary structure, myosin is a hexamer of 2 heavy chains and 4 light chains. In terms of processing, phosphorylation plays a central role in myosin regulation.

In terms of biological role, required for cytokinesis, could regulate contractile ring function. The chain is Myosin regulatory light chain sqh (sqh) from Drosophila melanogaster (Fruit fly).